The chain runs to 569 residues: Glutamate--tRNA ligase (569 aa).

Residues 107–117 (PEPNGYPHIGH) carry the 'HIGH' region motif.

It belongs to the class-I aminoacyl-tRNA synthetase family. Glutamate--tRNA ligase type 2 subfamily.

It localises to the cytoplasm. The enzyme catalyses tRNA(Glu) + L-glutamate + ATP = L-glutamyl-tRNA(Glu) + AMP + diphosphate. In terms of biological role, catalyzes the attachment of glutamate to tRNA(Glu) in a two-step reaction: glutamate is first activated by ATP to form Glu-AMP and then transferred to the acceptor end of tRNA(Glu). This Nitrosopumilus maritimus (strain SCM1) protein is Glutamate--tRNA ligase.